A 492-amino-acid chain; its full sequence is Phenylalanine--tRNA ligase alpha subunit (492 aa).

L-phenylalanine is bound by residues Thr335, 374–376 (QLE), and Tyr414. Glu416 lines the Mg(2+) pocket. Residue Phe439 coordinates L-phenylalanine.

Belongs to the class-II aminoacyl-tRNA synthetase family. Phe-tRNA synthetase alpha subunit type 2 subfamily. Tetramer of two alpha and two beta subunits. Mg(2+) serves as cofactor.

The protein resides in the cytoplasm. The enzyme catalyses tRNA(Phe) + L-phenylalanine + ATP = L-phenylalanyl-tRNA(Phe) + AMP + diphosphate + H(+). This Methanosarcina acetivorans (strain ATCC 35395 / DSM 2834 / JCM 12185 / C2A) protein is Phenylalanine--tRNA ligase alpha subunit.